Here is a 488-residue protein sequence, read N- to C-terminus: Transmembrane protein 39A (488 aa).

Asparagine 31 and asparagine 39 each carry an N-linked (GlcNAc...) asparagine glycan. The next 8 helical transmembrane spans lie at 72–92 (SLLF…IQYI), 110–130 (TSLN…VMLA), 154–174 (VLIS…CWTL), 182–202 (SVLN…LCCF), 287–307 (EVLF…LCFV), 319–339 (CEHL…QLLP), 420–440 (LLNL…YSLL), and 446–466 (NHTL…FKLL).

Belongs to the TMEM39 family. As to quaternary structure, interacts with SACM1L, SEC23A and SEC24A. In terms of assembly, (Microbial infection) Interacts with encephalomyocarditis virus (EMCV) major capsid proteins VP1 and VP2. Up-regulated in brain tumor glioblastoma multiforme cells (at protein level).

Its subcellular location is the endoplasmic reticulum membrane. Regulates autophagy by controlling the spatial distribution and levels of the intracellular phosphatidylinositol 4-phosphate (PtdIns(4)P) pools. Modulates (PtdIns(4)P) levels by regulating the ER-to-Golgi trafficking of the phosphatidylinositide phosphatase SACM1L. Functionally, (Microbial infection) Positively regulates the replication of encephalomyocarditis virus (EMCV) via autophagy-dependent pathway. The polypeptide is Transmembrane protein 39A (TMEM39A) (Homo sapiens (Human)).